The following is a 490-amino-acid chain: MNAQQAQREHVLAVSRDFISQPRLTYKTVSGVNGPLVILDEVKFPKFAEIVQLRLADGTVRSGQVLEVSGSKAVVQVFEGTSGIDAKNTLCEFTGDILRTPVSEDMLGRVFNGSGKPIDKGPPILAEDFLDIQGQPINPWSRIYPEEMIQTGISAIDVMNSIARGQKIPIFSAAGLPHNEIAAQICRQAGLVKLPGKSVLDDHTDNFAIVFAAMGVNMETARFFKQDFEENGSMENVCLFLNLANDPTIERIITPRLALTAAEFLAYQCEKHVLVILTDMSSYAEALREVSAAREEVPGRRGFPGYMYTDLATIYERAGRVEGRNGSITQIPILTMPNDDITHPIPDLTGYITEGQIYVDRQLHNRQIYPPVNVLPSLSRLMKSAIGEGMTRKDHSDVSNQLYACYAIGKDVQAMKAVVGEEALTPDDLLYLEFLTKFEKNFISQGNYENRTVFESLDIGWQLLRIFPKEMLKRIPASILAEFYPRDSRH.

Arginine 380 is a binding site for ATP.

It belongs to the ATPase alpha/beta chains family. V-ATPase is a heteromultimeric enzyme made up of two complexes: the ATP-hydrolytic V1 complex and the proton translocation V0 complex. The V1 complex consists of three catalytic AB heterodimers that form a heterohexamer, three peripheral stalks each consisting of EG heterodimers, one central rotor including subunits D and F, and the regulatory subunits C and H. The proton translocation complex V0 consists of the proton transport subunit a, a ring of proteolipid subunits c9c'', rotary subunit d, subunits e and f, and the accessory subunits VhaAC45 and ATP6AP2. Expressed in Malpighian tubules, rectum, antennal palps and oviduct.

In terms of biological role, non-catalytic subunit of the V1 complex of vacuolar(H+)-ATPase (V-ATPase), a multisubunit enzyme composed of a peripheral complex (V1) that hydrolyzes ATP and a membrane integral complex (V0) that translocates protons. V-ATPase is responsible for acidifying and maintaining the pH of intracellular compartments and in some cell types, is targeted to the plasma membrane, where it is responsible for acidifying the extracellular environment. Essential for the proper assembly and activity of V-ATPase. The protein is V-type proton ATPase subunit B (Vha55) of Drosophila melanogaster (Fruit fly).